Reading from the N-terminus, the 350-residue chain is Deoxyhypusine synthase-like protein (350 aa).

This sequence belongs to the deoxyhypusine synthase family.

In Chlorobaculum tepidum (strain ATCC 49652 / DSM 12025 / NBRC 103806 / TLS) (Chlorobium tepidum), this protein is Deoxyhypusine synthase-like protein.